Reading from the N-terminus, the 346-residue chain is Tripartite motif-containing protein 44 (346 aa).

A disordered region spans residues 68–167 (TPPASGGDDA…ETEAESEFDP (100 aa)). Acidic residues predominate over residues 89 to 167 (EGEVESEVGE…ETEAESEFDP (79 aa)). The B box-type zinc finger occupies 176–217 (VAKRKCPDHGLDLSTYCQEDRQLICVLCPVIGAHRGHQLSTL). Cys-181, His-184, Cys-203, and His-209 together coordinate Zn(2+). Positions 292 to 327 (AHVTEILADIQSHMDRLMTQMAQAKEQLDTSNESAE) form a coiled coil. The disordered stretch occupies residues 313–346 (AQAKEQLDTSNESAEPKAEGDEEGPSGASEEEDT). The segment covering 332–346 (GDEEGPSGASEEEDT) has biased composition (acidic residues). Ser-338 and Ser-341 each carry phosphoserine.

As to quaternary structure, interacts (via coiled coil) with TRIM17 (via coiled coil). In terms of tissue distribution, expressed mainly in brain with high level in cerebral hemispheres and cerebellum. Lower expression in kidney, lung and spleen. In brain is detected in the hippocampus, thalamic and pretectal nuclei, substantia nigra, the dorsal part of the medulla, the cerebellum, in the olfactory nucleus, other cortical areas apart from hippocampus and the striatum. Indeed expression is confined in neuronal somata namely in the CA3 region and dentate gyrus of the hippocampus, caudate-putamen, parabranchial nucleus, olfactory nucleus, cortex, deep cerebellar nuclei and thalamus. Also highly expressed in the spleen. thymus and testis.

Functionally, may play a role in the process of differentiation and maturation of neuronal cells. May regulate the activity of TRIM17. Is a negative regulator of PAX6 expression. This Mus musculus (Mouse) protein is Tripartite motif-containing protein 44 (Trim44).